We begin with the raw amino-acid sequence, 3131 residues long: Enniatin synthase (3131 aa).

Residues 53–466 (ADDKQRAVGH…VEKVDMMTQE (414 aa)) are condensation 1. The disordered stretch occupies residues 186–212 (NDEHPRQFETPDSSQATPEEDLQPNPS). An adenylation 1 region spans residues 495 to 887 (SQSPNKAAVA…GRMDSQVKIR (393 aa)). The region spanning 1010-1086 (SSGTDTYTKL…GLKAIVIGTS (77 aa)) is the Carrier 1 domain. Residue Ser1047 is modified to O-(pantetheine 4'-phosphoryl)serine. Residues 1105–1534 (SYAQNRMWFL…ETCISVLPLT (430 aa)) are condensation 2. Positions 1563-1960 (FREQAAANPE…GRMDNQFKIR (398 aa)) are adenylation 2. The interval 2021 to 2177 (EGWQDHFESG…YLAEVIDGLI (157 aa)) is S-adenosyl-L-methionine-dependent N-methyltransferase. 2 consecutive Carrier domains span residues 2504 to 2578 (FPIS…RQGL) and 2598 to 2671 (APRT…ESSH). Ser2538 and Ser2632 each carry O-(pantetheine 4'-phosphoryl)serine. Residues 2718-3123 (QDVYPSTQMQ…RHVLEEVCKT (406 aa)) are condensation 3.

This sequence belongs to the ATP-dependent AMP-binding enzyme family. The cofactor is pantetheine 4'-phosphate. In terms of processing, the N-terminus is blocked.

It participates in antibiotic biosynthesis; enniatin biosynthesis. Its activity is regulated as follows. The N-methylation activity is inhibited by S-adenosyl-L-homocysteine and sinefugin. Nonribosomal peptide synthetase that synthesizes enniatin by coupling three D-hydroxycarboxylic acids and three L-amino acids via amide and ester bonds in an alternating fashion. Whereas ESYN1 can accept different amino acids as precursors (L -valine, L-isoleucine or L-leucine), only one species of D-hydroxycarboxylic acid can be found in natural enniatin isolates (D-hydroxyisovaleric acid, D-Hiv). D-Hiv stems from L-valine deanimation by a valine aminotransferase to 2-keto-isovaleric acid (2-Kiv), which becomes subsequently reduced by a keto-isovaleric acid reductase (KivR) to D-Hiv. Peptide bond formation and N-methylation of the amino acid occur before three enzyme-bound dipeptidols are condensed to a hexapeptidol. This is Enniatin synthase from Fusarium equiseti (Fusarium scirpi).